The following is a 992-amino-acid chain: Probable RNA-dependent RNA polymerase 3 (992 aa).

Residues 88 to 113 (PRLSPGESPVQSPRTPAKKSCRASQD) are disordered.

Belongs to the RdRP family.

The catalysed reaction is RNA(n) + a ribonucleoside 5'-triphosphate = RNA(n+1) + diphosphate. Probably involved in the RNA silencing pathway and required for the generation of small interfering RNAs (siRNAs). This is Probable RNA-dependent RNA polymerase 3 (RDR3) from Arabidopsis thaliana (Mouse-ear cress).